The chain runs to 529 residues: DNA-binding protein (529 aa).

Residues 1 to 17 (MASREEEQRETTPERGR) show a composition bias toward basic and acidic residues. Disordered stretches follow at residues 1-108 (MASR…VDSE) and 125-168 (PVLI…SEST). Positions 129–139 (KHGKGGKRTVR) are enriched in basic residues. Basic and acidic residues predominate over residues 140–155 (RLNEDDPVARGMRTQE). Acidic residues predominate over residues 156–165 (EKEESSEAES). Position 195 is a phosphotyrosine; by host (Y195). C284 and H286 together coordinate Zn(2+). The segment at 297-331 (IEMDVTSENGQRALKEQSSKAKIVKNRWGRNVVQI) is flexible loop. Residues C339, C355, C396, C398, C450, and C467 each contribute to the Zn(2+) site. Residues 513 to 529 (VSLPVAHSDARQNPFDF) form a C-terminal arm, DBP binding region.

Belongs to the adenoviridae E2A DNA-binding protein family. As to quaternary structure, homomultimerizes on viral ssDNA bound to pTP. Forms an initiation complex with viral polymerase, pTP and hosts NFIA and POU2F1/OCT1. Interacts with host SRCAP.

It localises to the host nucleus. Plays a role in the elongation phase of viral strand displacement replication by unwinding the template in an ATP-independent fashion, employing its capacity to form multimers. Also enhances the rate of initiation. Released from template upon second strand synthesis. Assembles in complex with viral pTP, viral pol, host NFIA and host POU2F1/OCT1 on viral origin of replication. Covers the whole ssDNA genome during synthesis. The complementary strand synthesis induces its release from DNA template. May inhibit cellular transcription mediated by the interaction between host SRCAP and CBP. This is DNA-binding protein from Human adenovirus C serotype 2 (HAdV-2).